A 393-amino-acid polypeptide reads, in one-letter code: Cytochrome b (393 aa).

The next 4 helical transmembrane spans lie at F38–M58, W82–F104, V119–V139, and F185–A205. Heme b-binding residues include H88 and H102. 2 residues coordinate heme b: H189 and H203. H208 contributes to the a ubiquinone binding site. 4 consecutive transmembrane segments (helical) span residues F231–F251, V295–K315, I327–C347, and F354–P373.

Belongs to the cytochrome b family. The main subunits of complex b-c1 are: cytochrome b, cytochrome c1 and the Rieske protein. Heme b is required as a cofactor. Post-translationally, first mitochondrial-encoded protein to be shown to have its N-terminal methionine cleaved off.

The protein resides in the mitochondrion inner membrane. Its function is as follows. Component of the ubiquinol-cytochrome c reductase complex (complex III or cytochrome b-c1 complex) that is part of the mitochondrial respiratory chain. The b-c1 complex mediates electron transfer from ubiquinol to cytochrome c. Contributes to the generation of a proton gradient across the mitochondrial membrane that is then used for ATP synthesis. This Solanum tuberosum (Potato) protein is Cytochrome b (MT-CYB).